A 279-amino-acid polypeptide reads, in one-letter code: Thymidylate synthase (279 aa).

141-142 is a binding site for dUMP; that stretch reads RR. C161 serves as the catalytic Nucleophile. DUMP-binding positions include 181–184, N192, and 222–224; these read RSND and HIY. Position 184 (D184) interacts with (6R)-5,10-methylene-5,6,7,8-tetrahydrofolate. Residue A278 coordinates (6R)-5,10-methylene-5,6,7,8-tetrahydrofolate.

Belongs to the thymidylate synthase family. Bacterial-type ThyA subfamily. In terms of assembly, homodimer.

The protein resides in the cytoplasm. The catalysed reaction is dUMP + (6R)-5,10-methylene-5,6,7,8-tetrahydrofolate = 7,8-dihydrofolate + dTMP. Its pathway is pyrimidine metabolism; dTTP biosynthesis. Functionally, catalyzes the reductive methylation of 2'-deoxyuridine-5'-monophosphate (dUMP) to 2'-deoxythymidine-5'-monophosphate (dTMP) while utilizing 5,10-methylenetetrahydrofolate (mTHF) as the methyl donor and reductant in the reaction, yielding dihydrofolate (DHF) as a by-product. This enzymatic reaction provides an intracellular de novo source of dTMP, an essential precursor for DNA biosynthesis. In Bacillus licheniformis (strain ATCC 14580 / DSM 13 / JCM 2505 / CCUG 7422 / NBRC 12200 / NCIMB 9375 / NCTC 10341 / NRRL NRS-1264 / Gibson 46), this protein is Thymidylate synthase.